The following is a 140-amino-acid chain: Phosphoribosyl-AMP cyclohydrolase (140 aa).

Aspartate 84 lines the Mg(2+) pocket. Cysteine 85 serves as a coordination point for Zn(2+). Aspartate 86 and aspartate 88 together coordinate Mg(2+). Residues cysteine 101 and cysteine 108 each contribute to the Zn(2+) site.

The protein belongs to the PRA-CH family. In terms of assembly, homodimer. It depends on Mg(2+) as a cofactor. The cofactor is Zn(2+).

The protein localises to the cytoplasm. It catalyses the reaction 1-(5-phospho-beta-D-ribosyl)-5'-AMP + H2O = 1-(5-phospho-beta-D-ribosyl)-5-[(5-phospho-beta-D-ribosylamino)methylideneamino]imidazole-4-carboxamide. It functions in the pathway amino-acid biosynthesis; L-histidine biosynthesis; L-histidine from 5-phospho-alpha-D-ribose 1-diphosphate: step 3/9. Functionally, catalyzes the hydrolysis of the adenine ring of phosphoribosyl-AMP. This Chloroherpeton thalassium (strain ATCC 35110 / GB-78) protein is Phosphoribosyl-AMP cyclohydrolase.